An 83-amino-acid chain; its full sequence is Cytochrome b559 subunit alpha (83 aa).

A helical transmembrane segment spans residues 22–36; sequence VIHAVTLPAIFLAGF. Histidine 24 contacts heme.

This sequence belongs to the PsbE/PsbF family. As to quaternary structure, heterodimer of an alpha subunit and a beta subunit. PSII is composed of 1 copy each of membrane proteins PsbA, PsbB, PsbC, PsbD, PsbE, PsbF, PsbH, PsbI, PsbJ, PsbK, PsbL, PsbM, PsbT, PsbX, PsbY, PsbZ, Psb30/Ycf12, peripheral proteins PsbO, CyanoQ (PsbQ), PsbU, PsbV and a large number of cofactors. It forms dimeric complexes. Heme b is required as a cofactor.

Its subcellular location is the cellular thylakoid membrane. In terms of biological role, this b-type cytochrome is tightly associated with the reaction center of photosystem II (PSII). PSII is a light-driven water:plastoquinone oxidoreductase that uses light energy to abstract electrons from H(2)O, generating O(2) and a proton gradient subsequently used for ATP formation. It consists of a core antenna complex that captures photons, and an electron transfer chain that converts photonic excitation into a charge separation. In Synechococcus sp. (strain RCC307), this protein is Cytochrome b559 subunit alpha.